Consider the following 213-residue polypeptide: Ras-related protein Rab-4B (213 aa).

At A2 the chain carries N-acetylalanine. GDP contacts are provided by G18, T19, G20, K21, S22, and C23. GTP-binding residues include G18, T19, G20, K21, S22, C23, S37, H39, and T40. S22 provides a ligand contact to Mg(2+). The Switch 1 motif lies at 39-44; sequence HTIGVE. Mg(2+) is bound by residues T40 and D63. Residues 65 to 74 carry the Switch 2 motif; it reads AGQERFRSVT. G66 serves as a coordination point for GTP. At Q67 the chain carries 5-glutamyl serotonin. The GDP site is built by N121, K122, D124, A152, and L153. Residues N121, K122, D124, A152, and L153 each coordinate GTP. A phosphoserine mark is found at S185 and S193. 2 S-geranylgeranyl cysteine lipidation sites follow: C211 and C213. The residue at position 213 (C213) is a Cysteine methyl ester.

Belongs to the small GTPase superfamily. Rab family. In terms of assembly, interacts (GTP-bound form) with RUFY1; the interaction allows endosomal tethering and fusion. Mg(2+) is required as a cofactor. Serotonylation of Gln-67 by TGM2 during activation and aggregation of platelets leads to constitutive activation of GTPase activity.

The protein localises to the cell membrane. It is found in the early endosome membrane. It carries out the reaction GTP + H2O = GDP + phosphate + H(+). With respect to regulation, regulated by guanine nucleotide exchange factors (GEFs) which promote the exchange of bound GDP for free GTP. Regulated by GTPase activating proteins (GAPs) which increase the GTP hydrolysis activity. Inhibited by GDP dissociation inhibitors (GDIs). Functionally, the small GTPases Rab are key regulators of intracellular membrane trafficking, from the formation of transport vesicles to their fusion with membranes. Rabs cycle between an inactive GDP-bound form and an active GTP-bound form that is able to recruit to membranes different set of downstream effectors directly responsible for vesicle formation, movement, tethering and fusion. RAB4B mediates endosomal tethering and fusion through the interaction with RUFY1 and RAB14. Acts as a regulator of platelet alpha-granule release during activation and aggregation of platelets. The sequence is that of Ras-related protein Rab-4B from Mus musculus (Mouse).